A 552-amino-acid chain; its full sequence is CTP synthase (552 aa).

The interval 1-270 is amidoligase domain; the sequence is MTKYVFVTGG…DRIICEELKL (270 aa). Ser13 is a CTP binding site. UTP is bound at residue Ser13. ATP-binding positions include 14 to 19 and Asp71; that span reads SLGKGI. Mg(2+)-binding residues include Asp71 and Glu144. Residues 151–153, 191–196, and Lys227 contribute to the CTP site; these read DIE and KTKPTQ. Residues 191 to 196 and Lys227 contribute to the UTP site; that span reads KTKPTQ. Positions 295–547 constitute a Glutamine amidotransferase type-1 domain; sequence TIGMVGKYVD…VEAALANKQA (253 aa). Residue Gly356 participates in L-glutamine binding. Cys383 acts as the Nucleophile; for glutamine hydrolysis in catalysis. Residues 384-387, Glu407, and Arg473 each bind L-glutamine; that span reads LGMQ. Active-site residues include His520 and Glu522.

This sequence belongs to the CTP synthase family. As to quaternary structure, homotetramer.

The enzyme catalyses UTP + L-glutamine + ATP + H2O = CTP + L-glutamate + ADP + phosphate + 2 H(+). The catalysed reaction is L-glutamine + H2O = L-glutamate + NH4(+). It carries out the reaction UTP + NH4(+) + ATP = CTP + ADP + phosphate + 2 H(+). The protein operates within pyrimidine metabolism; CTP biosynthesis via de novo pathway; CTP from UDP: step 2/2. Allosterically activated by GTP, when glutamine is the substrate; GTP has no effect on the reaction when ammonia is the substrate. The allosteric effector GTP functions by stabilizing the protein conformation that binds the tetrahedral intermediate(s) formed during glutamine hydrolysis. Inhibited by the product CTP, via allosteric rather than competitive inhibition. In terms of biological role, catalyzes the ATP-dependent amination of UTP to CTP with either L-glutamine or ammonia as the source of nitrogen. Regulates intracellular CTP levels through interactions with the four ribonucleotide triphosphates. The sequence is that of CTP synthase from Burkholderia cenocepacia (strain ATCC BAA-245 / DSM 16553 / LMG 16656 / NCTC 13227 / J2315 / CF5610) (Burkholderia cepacia (strain J2315)).